A 606-amino-acid polypeptide reads, in one-letter code: MTDPNSKGSTSKEGFGDWCLLEADCSDVENDLGQLFERDTDSDISDLLDDTELEQGNSLELFHQQECEQSEEQLQKLKRKYLSPKAVAQLSPRLESISLSPQQKSKRRLFAEQDSGLELTLNNEAEDVTPEVEVPAIDSRPDDEGGSGDVDIHYTALLRSSNKKATLMAKFKESFGVGFNELTRQFKSHKTCCKDWVVSVYAVHDDLFESSKQLLQQHCDYIWVRGIGAMSLYLLCFKAGKNRGTVHKLITSMLNVHEQQILSEPPKLRNTAAALFWYKGCMGSGAFSHGPYPDWIAQQTILGHKSAEASTFDFSAMVQWAFHNHLLDEADIAYQYARLAPEDANAVAWLAHNNQAKFVRECAYMVRFYKKGQMRDMSISEWIYTKINEVEGEGHWSDIVKFIRYQNINFIVFLTALKEFLHSVPKKNCILIYGPPNSGKSSFAMSLIRVLKGRVLSFVNSKSQFWLQPLSECKIALLDDVTDPCWIYMDTYLRNGLDGHYVSLDCKYRAPTQMKFPPLLLTSNINVHGETNYRYLHTTIKGFEFPNPFPMKADNTPQFELTDQSWKSFFTRLWTQLDLSDQEEEGEDGESQRAFQCSARSANEHL.

Residues Lys78 to Lys80 carry the Nuclear localization signal motif. Phosphoserine; by host is present on residues Ser83 and Ser91. Residues Leu90 to Leu99 carry the Nuclear export signal motif. The segment at Gly146 to Ala309 is DNA-binding region. In terms of domain architecture, SF3 helicase spans Ile408–Gln558. Gly434 to Ser441 lines the ATP pocket. Residue Lys515 forms a Glycyl lysine isopeptide (Lys-Gly) (interchain with G-Cter in SUMO) linkage. The tract at residues Asp581 to Leu606 is disordered. Residues Arg593–Leu606 show a composition bias toward polar residues.

Belongs to the papillomaviridae E1 protein family. Can form hexamers. Interacts with E2 protein; this interaction increases E1 DNA binding specificity. Interacts with host DNA polymerase subunit POLA2. Interacts with host single stranded DNA-binding protein RPA1. Interacts with host TOP1; this interaction stimulates the enzymatic activity of TOP1. Phosphorylated. Post-translationally, sumoylated.

The protein resides in the host nucleus. The enzyme catalyses Couples ATP hydrolysis with the unwinding of duplex DNA by translocating in the 3'-5' direction.. The catalysed reaction is ATP + H2O = ADP + phosphate + H(+). Its function is as follows. ATP-dependent DNA 3'-5' helicase required for initiation of viral DNA replication. It forms a complex with the viral E2 protein. The E1-E2 complex binds to the replication origin which contains binding sites for both proteins. During the initial step, a dimer of E1 interacts with a dimer of protein E2 leading to a complex that binds the viral origin of replication with high specificity. Then, a second dimer of E1 displaces the E2 dimer in an ATP-dependent manner to form the E1 tetramer. Following this, two E1 monomers are added to each half of the site, which results in the formation of two E1 trimers on the viral ori. Subsequently, two hexamers will be created. The double hexamer acts as a bi-directional helicase machinery and unwinds the viral DNA and then recruits the host DNA polymerase to start replication. The sequence is that of Replication protein E1 from Human papillomavirus 5.